A 316-amino-acid chain; its full sequence is Initiation factor TFIIB homolog (316 aa).

The protein belongs to the asfivirus C315R family.

Putative initation factor. This Ornithodoros (relapsing fever ticks) protein is Initiation factor TFIIB homolog.